A 629-amino-acid chain; its full sequence is Putative polypeptide N-acetylgalactosaminyltransferase 10 (629 aa).

Over 1–12 (MGLSRYLSRRHH) the chain is Cytoplasmic. The chain crosses the membrane as a helical; Signal-anchor for type II membrane protein span at residues 13–33 (WVIQYCALLLFLYFIYSYVAV). Residues 34-629 (SNDAPRLNEE…RQANEHKELE (596 aa)) are Lumenal-facing. Residues N143 and N177 are each glycosylated (N-linked (GlcNAc...) asparagine). 5 disulfide bridges follow: C154–C385, C376–C454, C493–C510, C539–C556, and C582–C598. The segment at 163–275 (LPTVSVIFPF…YNWLPPLLDP (113 aa)) is catalytic subdomain A. Substrate is bound by residues D204 and R236. Mn(2+)-binding residues include D259 and H261. Residues 331-393 (PFDSPVMAGG…PCSRVAHIYR (63 aa)) form a catalytic subdomain B region. W362 contributes to the substrate binding site. H390 serves as a coordination point for Mn(2+). R393 lines the substrate pocket. The segment at 393 to 406 (RCKYAPFKNAGMGD) is flexible loop. The region spanning 526-629 (TRWHDIRPKG…RQANEHKELE (104 aa)) is the Ricin B-type lectin domain.

The protein belongs to the glycosyltransferase 2 family. GalNAc-T subfamily. It depends on Mn(2+) as a cofactor.

The protein resides in the golgi apparatus membrane. It carries out the reaction L-seryl-[protein] + UDP-N-acetyl-alpha-D-galactosamine = a 3-O-[N-acetyl-alpha-D-galactosaminyl]-L-seryl-[protein] + UDP + H(+). It catalyses the reaction L-threonyl-[protein] + UDP-N-acetyl-alpha-D-galactosamine = a 3-O-[N-acetyl-alpha-D-galactosaminyl]-L-threonyl-[protein] + UDP + H(+). It functions in the pathway protein modification; protein glycosylation. In terms of biological role, may catalyze the initial reaction in O-linked oligosaccharide biosynthesis, the transfer of an N-acetyl-D-galactosamine residue to a serine or threonine residue on the protein receptor. The polypeptide is Putative polypeptide N-acetylgalactosaminyltransferase 10 (Caenorhabditis briggsae).